A 215-amino-acid polypeptide reads, in one-letter code: Imidazole glycerol phosphate synthase subunit HisH (215 aa).

A Glutamine amidotransferase type-1 domain is found at 8 to 215 (KVVVFDYGFG…QLLNNWIGTL (208 aa)). Cysteine 86 serves as the catalytic Nucleophile. Residues histidine 196 and glutamate 198 contribute to the active site.

As to quaternary structure, heterodimer of HisH and HisF.

The protein resides in the cytoplasm. The catalysed reaction is 5-[(5-phospho-1-deoxy-D-ribulos-1-ylimino)methylamino]-1-(5-phospho-beta-D-ribosyl)imidazole-4-carboxamide + L-glutamine = D-erythro-1-(imidazol-4-yl)glycerol 3-phosphate + 5-amino-1-(5-phospho-beta-D-ribosyl)imidazole-4-carboxamide + L-glutamate + H(+). It carries out the reaction L-glutamine + H2O = L-glutamate + NH4(+). The protein operates within amino-acid biosynthesis; L-histidine biosynthesis; L-histidine from 5-phospho-alpha-D-ribose 1-diphosphate: step 5/9. IGPS catalyzes the conversion of PRFAR and glutamine to IGP, AICAR and glutamate. The HisH subunit catalyzes the hydrolysis of glutamine to glutamate and ammonia as part of the synthesis of IGP and AICAR. The resulting ammonia molecule is channeled to the active site of HisF. In Streptomyces avermitilis (strain ATCC 31267 / DSM 46492 / JCM 5070 / NBRC 14893 / NCIMB 12804 / NRRL 8165 / MA-4680), this protein is Imidazole glycerol phosphate synthase subunit HisH.